Here is a 376-residue protein sequence, read N- to C-terminus: Small RNA 2'-O-methyltransferase (376 aa).

S-adenosyl-L-methionine is bound by residues Thr49, Asp67, and Ser103. The Mg(2+) site is built by Glu121, Glu124, His125, and His171.

Belongs to the methyltransferase superfamily. HEN1 family. Mg(2+) is required as a cofactor.

Its subcellular location is the cytoplasm. The enzyme catalyses small RNA 3'-end nucleotide + S-adenosyl-L-methionine = small RNA 3'-end 2'-O-methylnucleotide + S-adenosyl-L-homocysteine + H(+). Functionally, methyltransferase that adds a 2'-O-methyl group at the 3'-end of piRNAs, a class of 24 to 30 nucleotide RNAs that are generated by a Dicer-independent mechanism and are primarily derived from transposons and other repeated sequence elements. This probably protects the 3'-end of piRNAs from uridylation activity and subsequent degradation. Stabilization of piRNAs is essential for gametogenesis. This Gallus gallus (Chicken) protein is Small RNA 2'-O-methyltransferase (HENMT1).